A 515-amino-acid chain; its full sequence is E3 ubiquitin-protein ligase RNF38 (515 aa).

A Bipartite nuclear localization signal 1 motif is present at residues 57–71 (DSPSPKRQRLSHSVF). Residues 73–141 (YTSASPAPSP…LSRHNSISQD (69 aa)) form a disordered region. Polar residues predominate over residues 89-104 (MTSNRQPPSVRPSQHH). The Bipartite nuclear localization signal 2 motif lies at 115 to 131 (RNRRSPPVRRQRGRRDR). Positions 115–134 (RNRRSPPVRRQRGRRDRLSR) are enriched in basic residues. Residues 463 to 504 (CVVCMCDFESRQLLRVLPCNHEFHAKCVDKWLKANRTCPICR) form an RING-type zinc finger.

As to expression, widely expressed with highest levels in testis.

The protein localises to the nucleus. The enzyme catalyses S-ubiquitinyl-[E2 ubiquitin-conjugating enzyme]-L-cysteine + [acceptor protein]-L-lysine = [E2 ubiquitin-conjugating enzyme]-L-cysteine + N(6)-ubiquitinyl-[acceptor protein]-L-lysine.. It functions in the pathway protein modification; protein ubiquitination. Functionally, acts as an E3 ubiquitin-protein ligase able to ubiquitinate p53/TP53 which promotes its relocalization to discrete foci associated with PML nuclear bodies. Exhibits preference for UBE2D2 as a E2 enzyme. This chain is E3 ubiquitin-protein ligase RNF38, found in Homo sapiens (Human).